A 163-amino-acid polypeptide reads, in one-letter code: Photosystem II extrinsic protein V (163 aa).

The signal sequence occupies residues 1–26; it reads MFKKSSQLFSLVFFTIFSIFIGTASA. Heme c is bound by residues cysteine 63, cysteine 66, histidine 67, and methionine 130.

The protein belongs to the cytochrome c family. PsbV subfamily. In terms of assembly, PSII is composed of 1 copy each of membrane proteins PsbA, PsbB, PsbC, PsbD, PsbE, PsbF, PsbH, PsbI, PsbJ, PsbK, PsbL, PsbM, PsbT, PsbY, PsbZ, Psb30/Ycf12, at least 3 peripheral proteins of the oxygen-evolving complex and a large number of cofactors. It forms dimeric complexes. Heme c is required as a cofactor.

The protein resides in the plastid. The protein localises to the chloroplast thylakoid membrane. In terms of biological role, one of the extrinsic, lumenal subunits of photosystem II (PSII). PSII is a light-driven water plastoquinone oxidoreductase, using light energy to abstract electrons from H(2)O, generating a proton gradient subsequently used for ATP formation. The extrinsic proteins stabilize the structure of photosystem II oxygen-evolving complex (OEC), the ion environment of oxygen evolution and protect the OEC against heat-induced inactivation. The polypeptide is Photosystem II extrinsic protein V (Phaeodactylum tricornutum (strain CCAP 1055/1)).